The primary structure comprises 111 residues: Large ribosomal subunit protein uL22 (111 aa).

This sequence belongs to the universal ribosomal protein uL22 family. Part of the 50S ribosomal subunit.

In terms of biological role, this protein binds specifically to 23S rRNA; its binding is stimulated by other ribosomal proteins, e.g. L4, L17, and L20. It is important during the early stages of 50S assembly. It makes multiple contacts with different domains of the 23S rRNA in the assembled 50S subunit and ribosome. Functionally, the globular domain of the protein is located near the polypeptide exit tunnel on the outside of the subunit, while an extended beta-hairpin is found that lines the wall of the exit tunnel in the center of the 70S ribosome. The sequence is that of Large ribosomal subunit protein uL22 from Clostridium kluyveri (strain NBRC 12016).